A 470-amino-acid polypeptide reads, in one-letter code: MNPNQKILFASATAIVIGTIAVLIGIVNLGLNIGLHLKPSCNCSRSQPEATNASQTIINNYYNKTNITQISNTNIQVEERASREFNNLTKGLCTINSWHIYGKDNAVRIGEDSDVLVTREPYVSCDPDECRFYALSQGTTIRGKHSNGTIHDRSQYRALISWPLSSPPTVYNSRVECIGWSSTSCHDGRARMSICISGPNNNASAVIWYNRRPVTEINTWARNILRTQESECVCHNGVCPVVFTDGSATGPAETRIYYFKEGKILKWEPLTGTAKHIEECSCYGEQARVTCTCRDNWQGSNRPVIQIDPVAMTHTSQYICSPVLTDNPRPNDPTVGKCNDPYPGNNNNGVKGFSYLDGGNTWLGRTISTASRSGYEMLKVPNALTDDRSKPTQGQTIVLNTDWSGYSGSFMDYWAEGECYRACFYVELIRGRPKEDRVWWTSNSIVSMCSSTEFLGQWNWPDGAKIEYFL.

Residues 1-6 are Intravirion-facing; it reads MNPNQK. Residues 7-27 form a helical membrane-spanning segment; it reads ILFASATAIVIGTIAVLIGIV. The interval 11-33 is involved in apical transport and lipid raft association; it reads SATAIVIGTIAVLIGIVNLGLNI. At 28-470 the chain is on the virion surface side; it reads NLGLNIGLHL…PDGAKIEYFL (443 aa). The hypervariable stalk region stretch occupies residues 36–89; sequence HLKPSCNCSRSQPEATNASQTIINNYYNKTNITQISNTNIQVEERASREFNNLT. N-linked (GlcNAc...) asparagine; by host glycans are attached at residues asparagine 42, asparagine 52, asparagine 63, asparagine 66, and asparagine 87. Positions 92–470 are head of neuraminidase; that stretch reads LCTINSWHIY…PDGAKIEYFL (379 aa). Disulfide bonds link cysteine 93-cysteine 419, cysteine 125-cysteine 130, cysteine 185-cysteine 232, cysteine 234-cysteine 239, cysteine 280-cysteine 293, cysteine 282-cysteine 291, cysteine 320-cysteine 338, and cysteine 423-cysteine 449. Arginine 119 contributes to the substrate binding site. Asparagine 147 carries N-linked (GlcNAc...) asparagine; by host glycosylation. Aspartate 152 (proton donor/acceptor) is an active-site residue. A substrate-binding site is contributed by arginine 153. N-linked (GlcNAc...) asparagine; by host glycosylation occurs at asparagine 202. 278-279 is a substrate binding site; the sequence is EE. Arginine 294 provides a ligand contact to substrate. Positions 295, 299, 326, and 348 each coordinate Ca(2+). Arginine 372 lines the substrate pocket. The active-site Nucleophile is tyrosine 406.

This sequence belongs to the glycosyl hydrolase 34 family. In terms of assembly, homotetramer. Requires Ca(2+) as cofactor. Post-translationally, N-glycosylated.

The protein resides in the virion membrane. It is found in the host apical cell membrane. The catalysed reaction is Hydrolysis of alpha-(2-&gt;3)-, alpha-(2-&gt;6)-, alpha-(2-&gt;8)- glycosidic linkages of terminal sialic acid residues in oligosaccharides, glycoproteins, glycolipids, colominic acid and synthetic substrates.. Inhibited by the neuraminidase inhibitors zanamivir (Relenza) and oseltamivir (Tamiflu). These drugs interfere with the release of progeny virus from infected cells and are effective against all influenza strains. Resistance to neuraminidase inhibitors is quite rare. Catalyzes the removal of terminal sialic acid residues from viral and cellular glycoconjugates. Cleaves off the terminal sialic acids on the glycosylated HA during virus budding to facilitate virus release. Additionally helps virus spread through the circulation by further removing sialic acids from the cell surface. These cleavages prevent self-aggregation and ensure the efficient spread of the progeny virus from cell to cell. Otherwise, infection would be limited to one round of replication. Described as a receptor-destroying enzyme because it cleaves a terminal sialic acid from the cellular receptors. May facilitate viral invasion of the upper airways by cleaving the sialic acid moieties on the mucin of the airway epithelial cells. Likely to plays a role in the budding process through its association with lipid rafts during intracellular transport. May additionally display a raft-association independent effect on budding. Plays a role in the determination of host range restriction on replication and virulence. Sialidase activity in late endosome/lysosome traffic seems to enhance virus replication. The sequence is that of Neuraminidase from Aves.